Here is a 348-residue protein sequence, read N- to C-terminus: ATPase GET3 (348 aa).

Position 26 to 33 (26 to 33 (KGGVGKTT)) interacts with ATP. D57 is a catalytic residue. 2 residues coordinate ATP: E241 and N268. Residues C280 and C283 each contribute to the Zn(2+) site. 310 to 312 (PLL) provides a ligand contact to ATP.

The protein belongs to the arsA ATPase family. As to quaternary structure, homodimer. Component of the Golgi to ER traffic (GET) complex, which is composed of GET1, GET2 and GET3. Within the complex, GET1 and GET2 form a heterotetramer which is stabilized by phosphatidylinositol binding and which binds to the GET3 homodimer. Interacts with the chloride channel protein GEF1.

It is found in the cytoplasm. The protein localises to the endoplasmic reticulum. Its subcellular location is the golgi apparatus. In terms of biological role, ATPase required for the post-translational delivery of tail-anchored (TA) proteins to the endoplasmic reticulum. Recognizes and selectively binds the transmembrane domain of TA proteins in the cytosol. This complex then targets to the endoplasmic reticulum by membrane-bound receptors GET1 and GET2, where the tail-anchored protein is released for insertion. This process is regulated by ATP binding and hydrolysis. ATP binding drives the homodimer towards the closed dimer state, facilitating recognition of newly synthesized TA membrane proteins. ATP hydrolysis is required for insertion. Subsequently, the homodimer reverts towards the open dimer state, lowering its affinity for the GET1-GET2 receptor, and returning it to the cytosol to initiate a new round of targeting. Cooperates with the HDEL receptor ERD2 to mediate the ATP-dependent retrieval of resident ER proteins that contain a C-terminal H-D-E-L retention signal from the Golgi to the ER. Involved in low-level resistance to the oxyanions arsenite and arsenate, and in heat tolerance. The chain is ATPase GET3 from Debaryomyces hansenii (strain ATCC 36239 / CBS 767 / BCRC 21394 / JCM 1990 / NBRC 0083 / IGC 2968) (Yeast).